We begin with the raw amino-acid sequence, 137 residues long: Large ribosomal subunit protein uL14A (137 aa).

Ser-2 bears the N-acetylserine mark. An N6,N6-dimethyllysine; by RKM1 mark is found at Lys-106 and Lys-110.

The protein belongs to the universal ribosomal protein uL14 family. Component of the large ribosomal subunit (LSU). Mature yeast ribosomes consist of a small (40S) and a large (60S) subunit. The 40S small subunit contains 1 molecule of ribosomal RNA (18S rRNA) and 33 different proteins (encoded by 57 genes). The large 60S subunit contains 3 rRNA molecules (25S, 5.8S and 5S rRNA) and 46 different proteins (encoded by 81 genes). In terms of processing, methylated by RKM1 at 2 different sites, but it is unclear which are the 2 methylated residues among Lys-40, Lys-106 and/or Lys-110.

It localises to the cytoplasm. Functionally, component of the ribosome, a large ribonucleoprotein complex responsible for the synthesis of proteins in the cell. The small ribosomal subunit (SSU) binds messenger RNAs (mRNAs) and translates the encoded message by selecting cognate aminoacyl-transfer RNA (tRNA) molecules. The large subunit (LSU) contains the ribosomal catalytic site termed the peptidyl transferase center (PTC), which catalyzes the formation of peptide bonds, thereby polymerizing the amino acids delivered by tRNAs into a polypeptide chain. The nascent polypeptides leave the ribosome through a tunnel in the LSU and interact with protein factors that function in enzymatic processing, targeting, and the membrane insertion of nascent chains at the exit of the ribosomal tunnel. In Saccharomyces cerevisiae (strain ATCC 204508 / S288c) (Baker's yeast), this protein is Large ribosomal subunit protein uL14A.